A 99-amino-acid polypeptide reads, in one-letter code: Large ribosomal subunit protein uL23 (99 aa).

Belongs to the universal ribosomal protein uL23 family. Part of the 50S ribosomal subunit. Contacts protein L29, and trigger factor when it is bound to the ribosome.

One of the early assembly proteins it binds 23S rRNA. One of the proteins that surrounds the polypeptide exit tunnel on the outside of the ribosome. Forms the main docking site for trigger factor binding to the ribosome. This chain is Large ribosomal subunit protein uL23, found in Francisella tularensis subsp. tularensis (strain SCHU S4 / Schu 4).